We begin with the raw amino-acid sequence, 1576 residues long: Disco-interacting protein 2 homolog B (1576 aa).

Phosphoserine is present on residues S9, S50, and S53. A DMAP1-binding domain is found at 12 to 131 (AVAALPPEVR…PMPTKRRSTF (120 aa)). The interval 31–167 (LSEGDITQKG…AALSAALQQS (137 aa)) is disordered. Residues 52–62 (YSPQTQETDSA) are compositionally biased toward polar residues. A compositionally biased stretch (low complexity) spans 70–83 (QTPAPSAAQTSAPS). The residue at position 71 (T71) is a Phosphothreonine. Over residues 92–104 (GARDERYRSDIHT) the composition is skewed to basic and acidic residues. The residue at position 100 (S100) is a Phosphoserine. T140 carries the phosphothreonine modification. Phosphoserine occurs at positions 146, 148, and 153. Positions 155–167 (RRQAALSAALQQS) are enriched in low complexity. A phosphoserine mark is found at S178, S193, and S203. The disordered stretch occupies residues 179–201 (IQGSSTSSSASSTLSHGEVKGTS). Over residues 182-193 (SSTSSSASSTLS) the composition is skewed to low complexity. The disordered stretch occupies residues 217–246 (SAPPDVTTTTSSSSSSSSIRPANIDLPPSG). A compositionally biased stretch (low complexity) spans 223–234 (TTTTSSSSSSSS). S259 carries the post-translational modification Phosphoserine.

This sequence belongs to the DIP2 family. In terms of assembly, interacts with alpha-tubulin. In terms of tissue distribution, moderately expressed in adult brain, placenta, skeletal muscle, heart, kidney, pancreas, lung, spleen and colon. Expression was weaker in adult liver, kidney, spleen, and ovary, and in fetal brain and liver. In the brain, it is expressed in the cerebral cortex; the frontal, parietal, occipital and temporal lobes; the paracentral gyrus; the pons; the corpus callosum and the hippocampus. Highest expression levels in the brain were found in the cerebral cortex and the frontal and parietal lobes.

It localises to the cell projection. The protein localises to the dendrite. It is found in the axon. The protein resides in the perikaryon. Functionally, negatively regulates axonal outgrowth and is essential for normal synaptic transmission. Not required for regulation of axon polarity. Promotes acetylation of alpha-tubulin. This Homo sapiens (Human) protein is Disco-interacting protein 2 homolog B (DIP2B).